The primary structure comprises 346 residues: Peripherin-2 (346 aa).

Topologically, residues Met-1 to Gln-18 are cytoplasmic. A helical transmembrane segment spans residues Gly-19–Leu-41. At Lys-42–Asn-62 the chain is on the lumenal side. Asn-53 carries an N-linked (GlcNAc...) asparagine glycan. A helical membrane pass occupies residues Ser-63–Gly-79. The Cytoplasmic segment spans residues Lys-80–Tyr-101. The chain crosses the membrane as a helical span at residues Leu-102–Leu-122. Residues Arg-123 to Thr-264 lie on the Lumenal side of the membrane. Asn-229 and Asn-263 each carry an N-linked (GlcNAc...) asparagine glycan. Residues Thr-265–Leu-283 form a helical membrane-spanning segment. The Cytoplasmic segment spans residues Arg-284–Gly-346. The tract at residues Gln-341 to Gly-346 is interaction with MREG.

This sequence belongs to the PRPH2/ROM1 family. In terms of assembly, homodimer; disulfide-linked. Forms a homotetramer. Forms a heterotetramer with ROM1. Homotetramer and heterotetramer core complexes go on to form higher order complexes by formation of intermolecular disulfide bonds. Interacts with MREG. Interacts with STX3. Interacts with SNAP25. In terms of tissue distribution, retina (photoreceptor). In rim region of ROS (rod outer segment) disks.

It is found in the membrane. The protein resides in the cell projection. The protein localises to the cilium. It localises to the photoreceptor outer segment. Its subcellular location is the photoreceptor inner segment. Its function is as follows. Essential for retina photoreceptor outer segment disk morphogenesis, may also play a role with ROM1 in the maintenance of outer segment disk structure. Required for the maintenance of retinal outer nuclear layer thickness. Required for the correct development and organization of the photoreceptor inner segment. This chain is Peripherin-2 (PRPH2), found in Bos taurus (Bovine).